We begin with the raw amino-acid sequence, 182 residues long: Adenine phosphoribosyltransferase (182 aa).

Belongs to the purine/pyrimidine phosphoribosyltransferase family. In terms of assembly, homodimer.

It localises to the cytoplasm. It catalyses the reaction AMP + diphosphate = 5-phospho-alpha-D-ribose 1-diphosphate + adenine. It functions in the pathway purine metabolism; AMP biosynthesis via salvage pathway; AMP from adenine: step 1/1. Catalyzes a salvage reaction resulting in the formation of AMP, that is energically less costly than de novo synthesis. The polypeptide is Adenine phosphoribosyltransferase (Pseudomonas syringae pv. syringae (strain B728a)).